The chain runs to 67 residues: Large ribosomal subunit protein uL29 (67 aa).

It belongs to the universal ribosomal protein uL29 family.

This chain is Large ribosomal subunit protein uL29, found in Desulfitobacterium hafniense (strain DSM 10664 / DCB-2).